Reading from the N-terminus, the 192-residue chain is Imidazoleglycerol-phosphate dehydratase (192 aa).

Belongs to the imidazoleglycerol-phosphate dehydratase family.

It is found in the cytoplasm. The enzyme catalyses D-erythro-1-(imidazol-4-yl)glycerol 3-phosphate = 3-(imidazol-4-yl)-2-oxopropyl phosphate + H2O. The protein operates within amino-acid biosynthesis; L-histidine biosynthesis; L-histidine from 5-phospho-alpha-D-ribose 1-diphosphate: step 6/9. This Hydrogenobaculum sp. (strain Y04AAS1) protein is Imidazoleglycerol-phosphate dehydratase.